The sequence spans 310 residues: Ribosomal RNA small subunit methyltransferase H (310 aa).

S-adenosyl-L-methionine is bound by residues 33-35 (GGH), Asp52, Phe79, Asp98, and Gln105.

Belongs to the methyltransferase superfamily. RsmH family.

Its subcellular location is the cytoplasm. The catalysed reaction is cytidine(1402) in 16S rRNA + S-adenosyl-L-methionine = N(4)-methylcytidine(1402) in 16S rRNA + S-adenosyl-L-homocysteine + H(+). Specifically methylates the N4 position of cytidine in position 1402 (C1402) of 16S rRNA. This chain is Ribosomal RNA small subunit methyltransferase H, found in Campylobacter jejuni (strain RM1221).